The chain runs to 914 residues: Isoleucine--tRNA ligase (914 aa).

A 'HIGH' region motif is present at residues proline 64–histidine 74. Residue glutamate 557 participates in L-isoleucyl-5'-AMP binding. Residues alanine 598 to serine 602 carry the 'KMSKS' region motif. An ATP-binding site is contributed by lysine 601. Residues cysteine 889, cysteine 892, cysteine 906, and cysteine 909 each contribute to the Zn(2+) site.

Belongs to the class-I aminoacyl-tRNA synthetase family. IleS type 1 subfamily. As to quaternary structure, monomer. It depends on Zn(2+) as a cofactor.

The protein localises to the cytoplasm. It catalyses the reaction tRNA(Ile) + L-isoleucine + ATP = L-isoleucyl-tRNA(Ile) + AMP + diphosphate. Its function is as follows. Catalyzes the attachment of isoleucine to tRNA(Ile). As IleRS can inadvertently accommodate and process structurally similar amino acids such as valine, to avoid such errors it has two additional distinct tRNA(Ile)-dependent editing activities. One activity is designated as 'pretransfer' editing and involves the hydrolysis of activated Val-AMP. The other activity is designated 'posttransfer' editing and involves deacylation of mischarged Val-tRNA(Ile). The chain is Isoleucine--tRNA ligase from Leptospira borgpetersenii serovar Hardjo-bovis (strain JB197).